A 442-amino-acid chain; its full sequence is Threonine/serine transporter TdcC (442 aa).

Transmembrane regions (helical) follow at residues 21–41 (TTWT…FFPI), 44–64 (GFGG…IAFL), 96–116 (GVVI…IYGV), 139–159 (VVAL…KDLM), 162–182 (VMSF…LSLI), 206–226 (ILVT…FSPI), 258–278 (ASIL…FTLS), 312–332 (ITLE…SFFG), 364–384 (LISM…NPNI), 388–408 (IEAM…MYAI), and 422–442 (ENYF…YKLL).

Belongs to the amino acid/polyamine transporter 2 family. SdaC/TdcC subfamily.

The protein resides in the cell inner membrane. It carries out the reaction L-threonine(in) + H(+)(in) = L-threonine(out) + H(+)(out). It catalyses the reaction L-serine(in) + H(+)(in) = L-serine(out) + H(+)(out). Involved in the import of threonine and serine into the cell, with the concomitant import of a proton (symport system). This is Threonine/serine transporter TdcC from Yersinia enterocolitica serotype O:8 / biotype 1B (strain NCTC 13174 / 8081).